Here is a 350-residue protein sequence, read N- to C-terminus: Transcriptional activator hacA (350 aa).

The segment at 1–118 (MKSADRFSPV…RLEMEKLESE (118 aa)) is disordered. Polar residues predominate over residues 35-47 (PADTSLQTKNVVA). Basic and acidic residues-rich tracts occupy residues 81–95 (KTED…ERVL) and 104–118 (SRER…LESE). Residues 87 to 150 (EQRRIERVLR…NRLSQQVAQL (64 aa)) enclose the bZIP domain. The segment at 89-142 (RRIERVLRNRAAAQTSRERKRLEMEKLESEKIDMEQQNQFLLQRLAQMEAENNR) is basic motif. The tract at residues 143–150 (LSQQVAQL) is leucine-zipper. Disordered stretches follow at residues 152–175 (AEVR…PTLT), 194–218 (PTPS…DLTQ), and 328–350 (SLQP…AGSA). A compositionally biased stretch (low complexity) spans 160–175 (STPTSSSPASVSPTLT). Polar residues-rich tracts occupy residues 196–211 (PSVT…SSLA) and 329–340 (LQPSHGASTSRC).

Belongs to the bZIP family. Homodimer.

The protein localises to the nucleus. Its function is as follows. Transcriptional activator involved in the unfolded protein response (UPR) pathway. Recognizes and binds to the UPR element (UPRE) in the promoter of UPR-regulated genes. Increases the synthesis of endoplasmic reticulum-resident proteins required for protein folding as well as components of the secretory pathway. This chain is Transcriptional activator hacA (hacA), found in Emericella nidulans (strain FGSC A4 / ATCC 38163 / CBS 112.46 / NRRL 194 / M139) (Aspergillus nidulans).